The following is an 898-amino-acid chain: Sodium/hydrogen exchanger 5 (898 aa).

At 1-3 the chain is on the cytoplasmic side; sequence MLR. Residues 4 to 24 traverse the membrane as a helical segment; sequence VALLLLPGLPLAGVGATEEPT. Topologically, residues 25-47 are extracellular; the sequence is QEPGPLGEPPGLALFRWQWHEVE. A helical transmembrane segment spans residues 48–68; it reads APYLVALWILVASLAKIVFHL. The Cytoplasmic portion of the chain corresponds to 69 to 75; that stretch reads SRKVTSL. A helical transmembrane segment spans residues 76-96; sequence VPESCLLILLGLALGGIVLAV. The Extracellular portion of the chain corresponds to 97-136; the sequence is AKKAEYQLEPGTFFLFLLPPIVLDSGYFMPSRLFFDNLGA. The chain crosses the membrane as a helical span at residues 137–157; sequence ILTYAVVGTLWNAFTTGVALW. The Cytoplasmic segment spans residues 158-175; that stretch reads GLQQAGLVAPRVQAGLLD. A helical membrane pass occupies residues 176–196; it reads FLLFGSLISAVDPVAVLAVFE. Topologically, residues 197–202 are extracellular; that stretch reads EVHVNE. Residue Asn-201 is glycosylated (N-linked (GlcNAc...) asparagine). The helical transmembrane segment at 203-223 threads the bilayer; it reads TLFIIVFGESLLNDAVTVVLY. Topologically, residues 224–248 are cytoplasmic; it reads KVCNSFVEMGSANVQATDYLKGVAS. Residues 249–269 traverse the membrane as a helical segment; that stretch reads LFVVSLGGAAVGLVFAFLLAL. Over 270–278 the chain is Extracellular; the sequence is TTRFTKRVR. The helical transmembrane segment at 279 to 299 threads the bilayer; the sequence is IIEPLLVFLLAYAAYLTAEMA. At 300-333 the chain is on the cytoplasmic side; it reads SLSAILAVTMCGLGCKKYVEANISHKSRTAVKYT. A helical membrane pass occupies residues 334–354; it reads MKTLASSAETVIFMLLGISAV. Residues 355–362 are Extracellular-facing; that stretch reads DSSKWAWD. A helical membrane pass occupies residues 363 to 383; that stretch reads SGLVLGTLFFILFFRALGVVL. Topologically, residues 384-400 are cytoplasmic; sequence QTWVLNQFRLVPLDKID. A helical transmembrane segment spans residues 401–421; sequence QVVMSYGGLRGAVAFALVILL. Topologically, residues 422–430 are extracellular; that stretch reads DRTKVPAKD. Residues 431-451 form a helical membrane-spanning segment; that stretch reads YFVATTIVVVFFTVIVQGLTI. At 452–898 the chain is on the cytoplasmic side; that stretch reads KPLVKWLRVK…CIQFNRGGRL (447 aa). 2 disordered regions span residues 660–692 and 801–888; these read TKSK…RDLG and ESLA…NSHW. Positions 662–674 are enriched in basic residues; sequence SKPRPRKTGHKKK. Positions 856–867 are enriched in polar residues; the sequence is ESSADIPQQQEL.

This sequence belongs to the monovalent cation:proton antiporter 1 (CPA1) transporter (TC 2.A.36) family. Interacts with CHP1 and CHP2. Interacts with ARRB2; facilitates the endocytosis of SLC9A5 from the plasma membrane. Interacts with RACK1; this interaction positively regulates SLC9A5 activity and promotes SLC9A5 localization to focal adhesions. Interacts with SCAMP2; this interaction regulates SLC9A5 cell-surface targeting and SLC9A5 activity. Post-translationally, phosphorylated by PRKAA2; promotes its accumulation at the cell surface. Phosphorylated by CSNK2A1 in a manner favoring its beta-arrestin binding and endocytosis. Highly expressed in brain. Strongly expressed in the dentate gyrus.

Its subcellular location is the cell membrane. It localises to the recycling endosome membrane. It is found in the cell projection. The protein localises to the dendritic spine membrane. The protein resides in the synaptic cell membrane. Its subcellular location is the cell junction. It localises to the focal adhesion. The enzyme catalyses Na(+)(in) + H(+)(out) = Na(+)(out) + H(+)(in). Functionally, plasma membrane Na(+)/H(+) antiporter. Mediates the electroneutral exchange of intracellular H(+) ions for extracellular Na(+) in 1:1 stoichiometry. Responsible for regulating intracellular pH homeostasis, in particular in neural tissues. Acts as a negative regulator of dendritic spine growth. Plays a role in postsynaptic remodeling and signaling. Can also contribute to organellar pH regulation, with consequences for receptor tyrosine kinase trafficking. In Rattus norvegicus (Rat), this protein is Sodium/hydrogen exchanger 5 (Slc9a5).